The sequence spans 358 residues: Sulfate/thiosulfate import ATP-binding protein CysA 1 (358 aa).

One can recognise an ABC transporter domain in the interval 3–237 (IQVENIRKAF…PASAFVYGFL (235 aa)). 35-42 (GPSGCGKT) is a binding site for ATP.

It belongs to the ABC transporter superfamily. Sulfate/tungstate importer (TC 3.A.1.6) family. As to quaternary structure, the complex is composed of two ATP-binding proteins (CysA), two transmembrane proteins (CysT and CysW) and a solute-binding protein (CysP).

It localises to the cell inner membrane. The catalysed reaction is sulfate(out) + ATP + H2O = sulfate(in) + ADP + phosphate + H(+). It catalyses the reaction thiosulfate(out) + ATP + H2O = thiosulfate(in) + ADP + phosphate + H(+). Functionally, part of the ABC transporter complex CysAWTP involved in sulfate/thiosulfate import. Responsible for energy coupling to the transport system. In Chromobacterium violaceum (strain ATCC 12472 / DSM 30191 / JCM 1249 / CCUG 213 / NBRC 12614 / NCIMB 9131 / NCTC 9757 / MK), this protein is Sulfate/thiosulfate import ATP-binding protein CysA 1.